Reading from the N-terminus, the 209-residue chain is Claudin-4 (209 aa).

Residues 1–9 (MASMGLQVM) are Cytoplasmic-facing. The segment at 1–103 (MASMGLQVMG…GVLLSVVGGK (103 aa)) is interaction with EPHA2. The helical transmembrane segment at 10–30 (GIALAVLGWLGAILSCALPMW) threads the bilayer. Residues 31–81 (RVTAFIGSNIVTSQTIWEGLWMNCVVQSTGQMQCKVYDSLLALPQDLQAAR) are Extracellular-facing. C54 and C64 are joined by a disulfide. A helical transmembrane segment spans residues 82–102 (ALIVICIILAVFGVLLSVVGG). The Cytoplasmic segment spans residues 103 to 117 (KCTNCVDDESSKAKI). A helical transmembrane segment spans residues 118 to 138 (MIVAGVVFLLAGLLVMVPVSW). At 139 to 160 (TANNVIRDFYNPLVASGQKREM) the chain is on the extracellular side. Residues 161–181 (GASLYVGWAAAGLLILGGALL) form a helical membrane-spanning segment. Residues 182–209 (CFNCPPRNDKPYSAKYSAARSAPASNYV) are Cytoplasmic-facing. Residue Y208 is modified to Phosphotyrosine; by EPHA2. Residues 208 to 209 (YV) are interactions with TJP1, TJP2 and TJP3.

It belongs to the claudin family. Interacts with EPHA2; phosphorylates CLDN4 and may regulate tight junctions. Directly interacts with TJP1/ZO-1, TJP2/ZO-2 and TJP3/ZO-3. Interacts with CLDN1. Interacts with CLDN8. In terms of processing, phosphorylated. Phosphorylation by EPHA2 is stimulated by EFNA1 and alters interaction with TJP1.

The protein resides in the cell junction. The protein localises to the tight junction. It is found in the cell membrane. Channel-forming tight junction protein that mediates paracellular chloride transport in the kidney. Plays a critical role in the paracellular reabsorption of filtered chloride in the kidney collecting ducts. Claudins play a major role in tight junction-specific obliteration of the intercellular space, through calcium-independent cell-adhesion activity. This Bos taurus (Bovine) protein is Claudin-4 (CLDN4).